Here is a 780-residue protein sequence, read N- to C-terminus: Zinc finger protein GLIS3 (780 aa).

2 stretches are compositionally biased toward polar residues: residues 80-92 and 106-115; these read PSLSSSHSSQNGT and VSGNSVSNSL. Disordered stretches follow at residues 80-148 and 290-315; these read PSLS…KKRA and PSALPLPLPPPQGPPPPYHAHPHLHH. The segment covering 135–148 has biased composition (basic residues); the sequence is SATRAHSTRSKKRA. A compositionally biased stretch (pro residues) spans 293–308; that stretch reads LPLPLPPPQGPPPPYH. The segment at 345-370 adopts a C2H2-type 1 zinc-finger fold; it reads HCCRWIDCSALYDQQEELVRHIEKVH. The segment at 379 to 406 adopts a C2H2-type 2; atypical zinc-finger fold; the sequence is FTCFWTGCPRRYKPFNARYKLLIHMRVH. 3 C2H2-type zinc fingers span residues 412–436, 442–466, and 472–496; these read NKCTFEGCKKAFSRLENLKIHLRSH, YLCQHPGCQKAFSNSSDRAKHQRTH, and YACQIPGCTKRYTDPSSLRKHVKAH. 2 disordered regions span residues 485–512 and 527–670; these read DPSSLRKHVKAHSSREQQARKKLRSSTE and LQPA…QPNG. Positions 490 to 506 match the Bipartite nuclear localization signal motif; that stretch reads RKHVKAHSSREQQARKK. Basic and acidic residues predominate over residues 497–512; the sequence is SSREQQARKKLRSSTE. The segment covering 567 to 577 has biased composition (low complexity); it reads HSTRSGTAAGA. The segment covering 593 to 605 has biased composition (polar residues); sequence VQGSPHNPSSQLP.

The protein belongs to the GLI C2H2-type zinc-finger protein family. In terms of tissue distribution, in the embryo, expressed at high levels in the kidney and testis. In the adult, expressed at high levels in the kidney and uterus and at lower levels in the brain, lung, skeletal muscle and pancreas.

Its subcellular location is the nucleus. In terms of biological role, acts both as a repressor and activator of transcription. Binds to the consensus sequence 5'-GACCACCCAC-3'. This Mus musculus (Mouse) protein is Zinc finger protein GLIS3.